The following is a 1186-amino-acid chain: ATP-dependent helicase/nuclease subunit A (1186 aa).

Residues 2–460 form the UvrD-like helicase ATP-binding domain; it reads NFSKNQRAVI…IELSENYRSQ (459 aa). 23 to 30 is an ATP binding site; sequence ASAGSGKT. The UvrD-like helicase C-terminal domain occupies 487 to 771; it reads DVELKAANRD…SVMTIHAAKG (285 aa).

Belongs to the helicase family. AddA subfamily. Heterodimer of AddA and AddB/RexB. Requires Mg(2+) as cofactor.

The enzyme catalyses Couples ATP hydrolysis with the unwinding of duplex DNA by translocating in the 3'-5' direction.. It carries out the reaction ATP + H2O = ADP + phosphate + H(+). Functionally, the heterodimer acts as both an ATP-dependent DNA helicase and an ATP-dependent, dual-direction single-stranded exonuclease. Recognizes the chi site generating a DNA molecule suitable for the initiation of homologous recombination. The AddA nuclease domain is required for chi fragment generation; this subunit has the helicase and 3' -&gt; 5' nuclease activities. The protein is ATP-dependent helicase/nuclease subunit A of Oenococcus oeni (strain ATCC BAA-331 / PSU-1).